The following is a 204-amino-acid chain: Altered inheritance of mitochondria protein 20 (204 aa).

The helical transmembrane segment at 6-26 (VAVGTAVGIPIAVGVIIALIF) threads the bilayer.

It belongs to the SKG1 family.

It localises to the vacuole membrane. In terms of biological role, involved in cell cycle progression and surviving DNA damage. This chain is Altered inheritance of mitochondria protein 20 (AIM20), found in Saccharomyces cerevisiae (strain RM11-1a) (Baker's yeast).